The primary structure comprises 738 residues: Vesicle-fusing ATPase (738 aa).

Residues 507 to 512 (NGIINY) and 547 to 554 (PGCGKSSL) each bind ATP.

Belongs to the AAA ATPase family. In terms of assembly, interacts with syn7A, snpA and snpC. It depends on Mg(2+) as a cofactor.

The protein resides in the cytoplasmic vesicle membrane. It localises to the endosome membrane. The catalysed reaction is ATP + H2O = ADP + phosphate + H(+). Required for vesicle-mediated transport. Involved in endocytosis and endosome-endosome fusion. May be required for transport from the endoplasmic reticulum to the Golgi stack, and for the fusion of transport vesicles within the Golgi cisternae. Required for cell polarity, locomotion and chemotaxis. In Dictyostelium discoideum (Social amoeba), this protein is Vesicle-fusing ATPase (nsfA).